The primary structure comprises 259 residues: Deoxyribose-phosphate aldolase (259 aa).

D102 serves as the catalytic Proton donor/acceptor. The active-site Schiff-base intermediate with acetaldehyde is K167. The active-site Proton donor/acceptor is the K201.

Belongs to the DeoC/FbaB aldolase family. DeoC type 2 subfamily.

The protein localises to the cytoplasm. It carries out the reaction 2-deoxy-D-ribose 5-phosphate = D-glyceraldehyde 3-phosphate + acetaldehyde. It functions in the pathway carbohydrate degradation; 2-deoxy-D-ribose 1-phosphate degradation; D-glyceraldehyde 3-phosphate and acetaldehyde from 2-deoxy-alpha-D-ribose 1-phosphate: step 2/2. In terms of biological role, catalyzes a reversible aldol reaction between acetaldehyde and D-glyceraldehyde 3-phosphate to generate 2-deoxy-D-ribose 5-phosphate. This is Deoxyribose-phosphate aldolase from Shigella flexneri.